Reading from the N-terminus, the 150-residue chain is MKRFILVLSFLSIIVAYPIQTNASPMPCSVILEPVDKNLKNAKGVALIYKVQLNPPSAARTNISILAVHLPAPSSFGNYDSYEGFATKPGEISWRFKLYPTPEEESPSWAGRIDTISAEMKNVKVQVRLSNSSTQKLGPSILTKNIESCY.

Positions 1-23 are cleaved as a signal peptide; that stretch reads MKRFILVLSFLSIIVAYPIQTNA.

The protein is SPbeta prophage-derived uncharacterized protein YoqH (yoqH) of Bacillus subtilis (strain 168).